Consider the following 63-residue polypeptide: 2-hydroxymuconate tautomerase (63 aa).

Catalysis depends on Pro2, which acts as the Proton acceptor; via imino nitrogen.

This sequence belongs to the 4-oxalocrotonate tautomerase family. Homohexamer.

It catalyses the reaction (2Z,4E)-2-hydroxyhexa-2,4-dienedioate = (3E)-2-oxohex-3-enedioate. It functions in the pathway aromatic compound metabolism; salicylate degradation. Functionally, catalyzes the ketonization of 2-hydroxymuconate stereoselectively to yield 2-oxo-3-hexenedioate. The chain is 2-hydroxymuconate tautomerase (nahJ) from Pseudomonas putida (Arthrobacter siderocapsulatus).